The chain runs to 126 residues: MASIETLVEEIGKLSLTEASELVKALEEKFGVSAAPAVIAGGMAAAPAGDAAAQEEKTEFDVELKAAGANKINVIKVVRSITGLGLKEAKEVVDGAPKVVKEAVSKEEAEKIAKELKDAGAEVELK.

Belongs to the bacterial ribosomal protein bL12 family. As to quaternary structure, homodimer. Part of the ribosomal stalk of the 50S ribosomal subunit. Forms a multimeric L10(L12)X complex, where L10 forms an elongated spine to which 2 to 4 L12 dimers bind in a sequential fashion. Binds GTP-bound translation factors.

Forms part of the ribosomal stalk which helps the ribosome interact with GTP-bound translation factors. Is thus essential for accurate translation. This Prosthecochloris aestuarii (strain DSM 271 / SK 413) protein is Large ribosomal subunit protein bL12.